Consider the following 962-residue polypeptide: Phenylalanine--tRNA ligase beta subunit (962 aa).

In terms of domain architecture, tRNA-binding spans 85 to 201; the sequence is TIRWCKVRVC…AEVFQGDELS (117 aa). Residues 456 to 538 form the B5 domain; sequence TQQSPILLST…RVIGFNRIPS (83 aa). D516, D522, E525, and E526 together coordinate Mg(2+). The insert stretch occupies residues 621 to 675; that stretch reads PDSTHNPDSGSDPIIPTGVTRITEPGSSGVSGPGNVGVKEKCSADTSIEHAPTTR. Residues 870–961 form the FDX-ACB domain; that stretch reads PTSPAATQHL…ASSKFGAIMR (92 aa).

The protein belongs to the phenylalanyl-tRNA synthetase beta subunit family. Type 1 subfamily. Tetramer of two alpha and two beta subunits. Mg(2+) is required as a cofactor.

It is found in the cytoplasm. The enzyme catalyses tRNA(Phe) + L-phenylalanine + ATP = L-phenylalanyl-tRNA(Phe) + AMP + diphosphate + H(+). The sequence is that of Phenylalanine--tRNA ligase beta subunit from Tropheryma whipplei (strain Twist) (Whipple's bacillus).